The following is a 237-amino-acid chain: Sugar fermentation stimulation protein homolog (237 aa).

The protein belongs to the SfsA family.

This Pseudomonas putida (strain ATCC 47054 / DSM 6125 / CFBP 8728 / NCIMB 11950 / KT2440) protein is Sugar fermentation stimulation protein homolog.